Reading from the N-terminus, the 244-residue chain is uncharacterized protein (244 aa).

The region spanning 12-80 is the HTH gntR-type domain; it reads VALWRQIADR…QGRGTMIERK (69 aa). Positions 40-59 form a DNA-binding region, H-T-H motif; it reads ETALAAEFGVNRHTVRSALA.

This is an uncharacterized protein from Rhizobium meliloti (strain 1021) (Ensifer meliloti).